The sequence spans 630 residues: Glutamyl-tRNA(Gln) amidotransferase subunit E (630 aa).

Belongs to the GatB/GatE family. GatE subfamily. Heterodimer of GatD and GatE.

The enzyme catalyses L-glutamyl-tRNA(Gln) + L-glutamine + ATP + H2O = L-glutaminyl-tRNA(Gln) + L-glutamate + ADP + phosphate + H(+). Allows the formation of correctly charged Gln-tRNA(Gln) through the transamidation of misacylated Glu-tRNA(Gln) in organisms which lack glutaminyl-tRNA synthetase. The reaction takes place in the presence of glutamine and ATP through an activated gamma-phospho-Glu-tRNA(Gln). The GatDE system is specific for glutamate and does not act on aspartate. This chain is Glutamyl-tRNA(Gln) amidotransferase subunit E, found in Methanocaldococcus jannaschii (strain ATCC 43067 / DSM 2661 / JAL-1 / JCM 10045 / NBRC 100440) (Methanococcus jannaschii).